A 151-amino-acid chain; its full sequence is Linear element protein Mug20 (151 aa).

Residues Glu56–Glu140 are a coiled coil.

In terms of assembly, component of linear elements (LinEs), which are similar to synaptonemal complexes, at least composed of rec27, rec25, rec10 and mug20. Interacts with rec10.

It is found in the cytoplasm. It localises to the nucleus. The protein localises to the chromosome. Its function is as follows. During meiotic DNA recombination, binds to and may help activate DNA double-strand break (DSB) hotspot sites. This Schizosaccharomyces pombe (strain 972 / ATCC 24843) (Fission yeast) protein is Linear element protein Mug20.